The primary structure comprises 494 residues: MKKQAFSSEQYLNLQRDHILERINQFDGKLYLEFGGKMLEDFHAARVLPGYEPDNKIKLLQELKEQVEVVIAINASNIEHSKARGDLGISYDQEVLRLIDKFNELGIFVGSVVITQYAGQPAADVFRNQLEKNGIDSYLHYPIKGYPTDMDHIISPEGMGKNDYIKTSRNLIVVTAPGPGSGKLATCMSNMYHDQINGIKSGYAKFETFPVWNLPLHHPVNLAYEAATADLDDVNMIDPFHLQTYGETTVNYNRDIEIFPVLKRMLERILGKSPYSSPTDMGVNMVGFAITDDEAAVEASKQEIIRRYYQTVLDFKAEKVGEAAVKKIELLMNDLSITPADRKVAVVARQKAEETGGPALAFELPNGEIVTGKNSELFGPTAAALINAIKKSADIAKEVKLIEPEVVKPIQGLKIDHLGSRNPRLHSNEILIALAITATENPDAARAMEELGNLKGSEAHSTIILTDEDKNVLRKLGINVTFDPYYQYDRLYRK.

This sequence belongs to the UPF0371 family.

This Streptococcus pneumoniae (strain Hungary19A-6) protein is UPF0371 protein SPH_0451.